The chain runs to 537 residues: Glucose-6-phosphate isomerase (537 aa).

Residue E341 is the Proton donor of the active site. Catalysis depends on residues H372 and K501.

It belongs to the GPI family.

The protein localises to the cytoplasm. It carries out the reaction alpha-D-glucose 6-phosphate = beta-D-fructose 6-phosphate. The protein operates within carbohydrate biosynthesis; gluconeogenesis. It participates in carbohydrate degradation; glycolysis; D-glyceraldehyde 3-phosphate and glycerone phosphate from D-glucose: step 2/4. Catalyzes the reversible isomerization of glucose-6-phosphate to fructose-6-phosphate. This is Glucose-6-phosphate isomerase from Jannaschia sp. (strain CCS1).